Reading from the N-terminus, the 65-residue chain is Prokaryotic ubiquitin-like protein UBact (65 aa).

Residues 1–17 (MEVNMPTTEQGQKNKQM) show a composition bias toward polar residues. Residues 1 to 65 (MEVNMPTTEQ…ARRYRQRTGE (65 aa)) form a disordered region. The span at 35 to 65 (KVEKPNTEEILKRMRKVDPDQARRYRQRTGE) shows a compositional bias: basic and acidic residues. Residue Glu-65 forms an Isoglutamyl lysine isopeptide (Glu-Lys) (interchain with K-? in acceptor proteins) linkage.

It belongs to the ubiquitin-like protein UBact family.

Its function is as follows. May function as a protein modifier covalently attached to lysine residues of substrate proteins. This may serve to target the modified proteins for degradation by proteasomes. The sequence is that of Prokaryotic ubiquitin-like protein UBact from Methylacidiphilum infernorum (isolate V4) (Methylokorus infernorum (strain V4)).